A 246-amino-acid polypeptide reads, in one-letter code: Large ribosomal subunit protein uL30 (246 aa).

Met1 bears the N-acetylmethionine mark. A run of 4 repeats spans residues 7-17 (KKVPSVPESLL), 18-28 (KRRQAYAAAKA), 29-40 (KRLKRLLAQKKF), and 41-52 (RKAQRKIIYERA). Residues 7 to 52 (KKVPSVPESLLKRRQAYAAAKAKRLKRLLAQKKFRKAQRKIIYERA) form a 4 X 12 AA tandem repeats region.

Belongs to the universal ribosomal protein uL30 family. Component of the large ribosomal subunit.

The protein resides in the cytoplasm. In terms of biological role, component of the large ribosomal subunit. The ribosome is a large ribonucleoprotein complex responsible for the synthesis of proteins in the cell. Binds to G-rich structures in 28S rRNA and in mRNAs. Plays a regulatory role in the translation apparatus; inhibits cell-free translation of mRNAs. This Gallus gallus (Chicken) protein is Large ribosomal subunit protein uL30 (RPL7).